The following is a 166-amino-acid chain: MTREEKSIAIGDLTEKLAGTNILYVADISGLNAETTSNLRRACFKAGIKLEVVKNTLLVKAMEASDKDFGDLPLTLKGNTSIFFADVANGPAKIIKDFRKKSDKPLLKGAFINDEIYIGDNLLDSLVNLKSRDEVIGEIIGLLQSPAKRVIAALLNNAESKGEVAE.

It belongs to the universal ribosomal protein uL10 family. Part of the ribosomal stalk of the 50S ribosomal subunit. The N-terminus interacts with L11 and the large rRNA to form the base of the stalk. The C-terminus forms an elongated spine to which L12 dimers bind in a sequential fashion forming a multimeric L10(L12)X complex.

In terms of biological role, forms part of the ribosomal stalk, playing a central role in the interaction of the ribosome with GTP-bound translation factors. The protein is Large ribosomal subunit protein uL10 of Flavobacterium psychrophilum (strain ATCC 49511 / DSM 21280 / CIP 103535 / JIP02/86).